We begin with the raw amino-acid sequence, 118 residues long: Autophagy-related protein 8D (118 aa).

Glycine 118 carries Phosphatidylethanolamine amidated glycine lipidation.

Belongs to the ATG8 family. Interacts with ATG4. Post-translationally, the C-terminal Gly is amidated with phosphatidylethanolamine by an activating system similar to that for ubiquitin.

It localises to the cytoplasmic vesicle. The protein localises to the autophagosome membrane. Its subcellular location is the vacuole membrane. The protein resides in the cytoplasm. It is found in the cytoskeleton. Functionally, ubiquitin-like modifier involved in autophagosomes formation. May mediate the delivery of the autophagosomes to the vacuole via the microtubule cytoskeleton. The chain is Autophagy-related protein 8D (ATG8D) from Oryza sativa subsp. japonica (Rice).